Here is a 96-residue protein sequence, read N- to C-terminus: Large ribosomal subunit protein bL27 (96 aa).

Residues 1-9 (MLRLDLQFF) constitute a propeptide that is removed on maturation. Positions 14–35 (GVGSTKNGRDSQSKRLGAKRAD) are disordered.

Belongs to the bacterial ribosomal protein bL27 family. In terms of processing, the N-terminus is cleaved by ribosomal processing cysteine protease Prp.

This is Large ribosomal subunit protein bL27 from Bacillus cytotoxicus (strain DSM 22905 / CIP 110041 / 391-98 / NVH 391-98).